A 162-amino-acid chain; its full sequence is Anthrone oxygenase nsrD (162 aa).

The next 3 helical transmembrane spans lie at 17 to 37 (FLSG…LDTI), 54 to 74 (GSIY…YVAL), and 86 to 106 (PYVL…WVMV). N-linked (GlcNAc...) asparagine glycosylation is present at Asn109. Residues 130–150 (LVVKWAWLHVVRSLYPLFGAF) form a helical membrane-spanning segment.

Belongs to the anthrone oxygenase family.

The protein localises to the membrane. It catalyses the reaction emodin anthrone + O2 = emodin + H2O + H(+). It participates in secondary metabolite biosynthesis. In terms of biological role, anthrone oxygenase; part of the gene cluster that mediates the biosynthesis of the tetrahydroxanthone dimer neosartorin, which exhibits antibacterial activity. The two different monomeric units appear to be synthesized by the same set of enzymes, among which the Baeyer-Villiger monooxygenase nsrF is the key enzyme for the divergence of the biosynthetic routes. The pathway begins with the synthesis of atrochrysone thioester by the polyketide synthase nsrB. The atrochrysone carboxyl ACP thioesterase nsrC then breaks the thioester bond and releases the atrochrysone carboxylic acid from AacuL. Atrochrysone carboxylic acid is decarboxylated by the decarboxylase nsrE, and oxidized by the anthrone oxygenase nsrD to yield emodin. Emodin is then reduced to emodin hydroquinone by the oxidoreductase nsrR. A-ring reduction by the short chain dehydrogenase nsrJ, dehydration by the scytalone dehydratase-like protein nsrI and probable spontaneous re-oxidation, results in overall deoxygenation to chrysophanol. The Baeyer-Villiger monooxygenase nsrF accepts chrysophanol as a substrate to insert one oxygen atom at two different positions to yield the precursors of both monomric units. NsrF is promiscuous/flexible in interacting with the 2 (non methylated and methylated) aromatic rings of chrysophanol, thus diverging the biosynthetic pathway at this point. After the hydrolysis of the lactones, methylesterification by the methyltransferase nsrG yields respectively moniliphenone and 2,2',6'-trihydroxy-4-methyl-6-methoxya-cyldiphenylmethanone. The next steps are the hydroxylation by the FAD-dependent monooxygenase nsrK, followed by isomerization by the monooxygenase nsrQ. The short chain dehydrogenase/reductase nsrO then catalyzes the C-5 ketoreduction to give the xanthone skeleton of blennolide C and 5-acetylblennolide A. The acetyltransferase nsrL has a strict substrate specificity and uses only blennolide A but not blennolide C to yield 5-acetylblennolide A as the single-acetylated product. In the final step of the biosynthesis, the heterodimerization of the 2 xanthones, blennolide C and 5-acetylblennolide A, is catalyzed by the cytochrome P450 monooxygenase nsrP. NsrP can utilize at least three different xanthones as its substrates to perform the dimerization reaction. The chain is Anthrone oxygenase nsrD from Aspergillus novofumigatus (strain IBT 16806).